The sequence spans 439 residues: Glutamyl-tRNA reductase (439 aa).

Residues 48-51 (TCNR), Ser107, 112-114 (EPQ), and Gln118 contribute to the substrate site. Cys49 acts as the Nucleophile in catalysis. 187–192 (GAGEMA) provides a ligand contact to NADP(+).

This sequence belongs to the glutamyl-tRNA reductase family. Homodimer.

It carries out the reaction (S)-4-amino-5-oxopentanoate + tRNA(Glu) + NADP(+) = L-glutamyl-tRNA(Glu) + NADPH + H(+). It participates in porphyrin-containing compound metabolism; protoporphyrin-IX biosynthesis; 5-aminolevulinate from L-glutamyl-tRNA(Glu): step 1/2. Functionally, catalyzes the NADPH-dependent reduction of glutamyl-tRNA(Glu) to glutamate 1-semialdehyde (GSA). The protein is Glutamyl-tRNA reductase of Maridesulfovibrio salexigens (strain ATCC 14822 / DSM 2638 / NCIMB 8403 / VKM B-1763) (Desulfovibrio salexigens).